The primary structure comprises 361 residues: 3-dehydroquinate synthase (361 aa).

NAD(+) is bound by residues 104 to 108 (GVIGD), 128 to 129 (TT), K141, K150, and 168 to 171 (FLRT). 3 residues coordinate Zn(2+): E183, H246, and H263.

Belongs to the sugar phosphate cyclases superfamily. Dehydroquinate synthase family. It depends on Co(2+) as a cofactor. Requires Zn(2+) as cofactor. The cofactor is NAD(+).

The protein localises to the cytoplasm. It carries out the reaction 7-phospho-2-dehydro-3-deoxy-D-arabino-heptonate = 3-dehydroquinate + phosphate. The protein operates within metabolic intermediate biosynthesis; chorismate biosynthesis; chorismate from D-erythrose 4-phosphate and phosphoenolpyruvate: step 2/7. Its function is as follows. Catalyzes the conversion of 3-deoxy-D-arabino-heptulosonate 7-phosphate (DAHP) to dehydroquinate (DHQ). The protein is 3-dehydroquinate synthase of Opitutus terrae (strain DSM 11246 / JCM 15787 / PB90-1).